The primary structure comprises 1011 residues: Protein argonaute 1C (1011 aa).

A compositionally biased stretch (basic residues) spans 1 to 11 (MASRRPTHRHH). 2 disordered regions span residues 1–95 (MASR…SPLA) and 107–147 (RPSE…PLRP). Low complexity-rich tracts occupy residues 28-53 (ARYA…ARGA) and 61-92 (QQQQ…ASSS). A compositionally biased stretch (polar residues) spans 127–140 (ATTTPHHIPSSSKS). A PAZ domain is found at 352–462 (PVIDFVAQLL…LPMEVCKIVE (111 aa)). Positions 638 to 959 (LLIGILPDNN…AAFRARFYME (322 aa)) constitute a Piwi domain. Residues 963–982 (SDSSSVVSGPGVRGPLSGSS) are compositionally biased toward low complexity. Residues 963-994 (SDSSSVVSGPGVRGPLSGSSTSRTRAPGGAAV) are disordered.

This sequence belongs to the argonaute family. Ago subfamily.

Its function is as follows. Probably involved in the RNA silencing pathway. May bind to short RNAs such as microRNAs (miRNAs) or short interfering RNAs (siRNAs), and represses the translation of mRNAs which are complementary to them. In Oryza sativa subsp. japonica (Rice), this protein is Protein argonaute 1C (AGO1C).